Reading from the N-terminus, the 513-residue chain is Xylose import ATP-binding protein XylG (513 aa).

ABC transporter domains are found at residues 5 to 242 (LEMK…VGRE) and 259 to 505 (LRIE…LRSE). 37-44 (GENGSGKS) provides a ligand contact to ATP.

This sequence belongs to the ABC transporter superfamily. Xylose importer (TC 3.A.1.2.4) family. The complex is composed of two ATP-binding proteins (XylG), two transmembrane proteins (XylH) and a solute-binding protein (XylF).

It is found in the cell inner membrane. It carries out the reaction D-xylose(out) + ATP + H2O = D-xylose(in) + ADP + phosphate + H(+). Part of the ABC transporter complex XylFGH involved in xylose import. Responsible for energy coupling to the transport system. The protein is Xylose import ATP-binding protein XylG of Escherichia coli (strain UTI89 / UPEC).